Here is a 178-residue protein sequence, read N- to C-terminus: Conodipine-P3 (178 aa).

A signal peptide spans 1-24 (MKLLAPVLWAMAALGVTWLVAVDS). Pro-38 is subject to 4-hydroxyproline. 4-hydroxyproline; partial occurs at positions 42 and 49. His-54 is a catalytic residue. Positions 98–130 (KREVTSHRATSIAHSRLWKTALDQKSFLNRKAR) are cleaved as a propeptide — interchain peptide. Position 131 is a pyrrolidone carboxylic acid (Gln-131). At Pro-137 the chain carries 4-hydroxyproline; partial.

It belongs to the phospholipase A2 family. Group IX subfamily. In terms of assembly, heterodimer of an alpha and a beta chain; probably disulfide-linked. Ca(2+) serves as cofactor. Expressed by the venom duct.

The protein resides in the secreted. The enzyme catalyses a 1,2-diacyl-sn-glycero-3-phosphocholine + H2O = a 1-acyl-sn-glycero-3-phosphocholine + a fatty acid + H(+). Functionally, catalyzes the calcium-dependent hydrolysis of the 2-acyl groups in 3-sn-phosphoglycerides. In Conus purpurascens (Purple cone), this protein is Conodipine-P3.